The chain runs to 97 residues: Coiled-coil domain-containing protein 167 (97 aa).

Residues 2–78 (TKKKRENLGV…LLRHENRKNT (77 aa)) adopt a coiled-coil conformation. Residues 78 to 95 (TLLSVAIFTVFALLYAYW) form a helical membrane-spanning segment.

The protein localises to the membrane. The protein is Coiled-coil domain-containing protein 167 (Ccdc167) of Mus musculus (Mouse).